We begin with the raw amino-acid sequence, 133 residues long: Small ribosomal subunit protein eS8 (133 aa).

Positions 1-22 are disordered; that stretch reads MGFYQGPDNRKITGGLKGKHRD.

It belongs to the eukaryotic ribosomal protein eS8 family. Part of the 30S ribosomal subunit.

In Saccharolobus islandicus (strain M.14.25 / Kamchatka #1) (Sulfolobus islandicus), this protein is Small ribosomal subunit protein eS8.